The chain runs to 486 residues: Recombining binding protein suppressor of hairless (486 aa).

DNA-binding stretches follow at residues 43-53 (QKSYGNEKRFF) and 151-156 (SKPSKK). K161 bears the N6-acetyllysine mark. The tract at residues 178 to 183 (RLRSQT) is DNA-binding. Positions 341 to 431 (PVVESLQLNG…YSTSLTFTYT (91 aa)) constitute an IPT/TIG domain. The span at 451-467 (SSQVPPNESNTNSEGSY) shows a compositional bias: polar residues. The segment at 451-486 (SSQVPPNESNTNSEGSYTNASTNSTSVTSSTATVVS) is disordered. Over residues 468–486 (TNASTNSTSVTSSTATVVS) the composition is skewed to low complexity.

This sequence belongs to the Su(H) family. As to quaternary structure, interacts with activated NOTCH1, NOTCH2 or NOTCH3. Interacts with MINT/SHARP. This interaction may mediate the recruitment of large corepressor complexes containing proteins such as HDAC1, HDAC2, NCOR2, SAP30, FHL1/KYOT2 and CIR1. Interacts with EP300, MAML1 and PTF1A. Interacts with RITA1, leading to nuclear export, prevent the interaction between RBPJ and NICD product and subsequent down-regulation of the Notch signaling pathway. Interacts with SNW1. Interacts with CHCHD2 and CXXC5. Interacts with BEND6 (via BEN domain). Interacts with NKAPL. Interacts with ZMIZ1. Interacts with RBM15. Interacts with L3MBTL3 and KDM1A; the interaction with KDM1A is weaker in the absence of L3MBTL3 and the interaction with L3MBTL3 is impaired by Notch-derived peptides containing the intracellular domain (NICD).

The protein localises to the nucleus. It is found in the cytoplasm. In terms of biological role, transcriptional regulator that plays a central role in Notch signaling, a signaling pathway involved in cell-cell communication that regulates a broad spectrum of cell-fate determinations. Acts as a transcriptional repressor when it is not associated with Notch proteins. When associated with some NICD product of Notch proteins (Notch intracellular domain), it acts as a transcriptional activator that activates transcription of Notch target genes. Probably represses or activates transcription via the recruitment of chromatin remodeling complexes containing histone deacetylase or histone acetylase proteins, respectively. Specifically binds to the immunoglobulin kappa-type J segment recombination signal sequence. Binds specifically to methylated DNA. Binds to the oxygen responsive element of COX4I2 and activates its transcription under hypoxia conditions (4% oxygen). Negatively regulates the phagocyte oxidative burst in response to bacterial infection by repressing transcription of NADPH oxidase subunits. This chain is Recombining binding protein suppressor of hairless (RBPJ), found in Pongo abelii (Sumatran orangutan).